A 40-amino-acid chain; its full sequence is MPGAFSQNSSKRRAVLPRSHRVAGRGPAEAGCLPGAPAGS.

Positions 1 to 40 are disordered; the sequence is MPGAFSQNSSKRRAVLPRSHRVAGRGPAEAGCLPGAPAGS. A compositionally biased stretch (basic residues) spans 10-23; that stretch reads SKRRAVLPRSHRVA.

The sequence is that of Putative protein FAM86JP from Homo sapiens (Human).